We begin with the raw amino-acid sequence, 79 residues long: Exodeoxyribonuclease 7 small subunit (79 aa).

It belongs to the XseB family. As to quaternary structure, heterooligomer composed of large and small subunits.

It localises to the cytoplasm. It carries out the reaction Exonucleolytic cleavage in either 5'- to 3'- or 3'- to 5'-direction to yield nucleoside 5'-phosphates.. Functionally, bidirectionally degrades single-stranded DNA into large acid-insoluble oligonucleotides, which are then degraded further into small acid-soluble oligonucleotides. The chain is Exodeoxyribonuclease 7 small subunit from Dechloromonas aromatica (strain RCB).